A 428-amino-acid chain; its full sequence is Histidine--tRNA ligase (428 aa).

Belongs to the class-II aminoacyl-tRNA synthetase family. As to quaternary structure, homodimer.

The protein localises to the cytoplasm. It carries out the reaction tRNA(His) + L-histidine + ATP = L-histidyl-tRNA(His) + AMP + diphosphate + H(+). The chain is Histidine--tRNA ligase from Bordetella bronchiseptica (strain ATCC BAA-588 / NCTC 13252 / RB50) (Alcaligenes bronchisepticus).